The chain runs to 513 residues: ATP synthase subunit alpha (513 aa).

169–176 (GDRQTGKT) is an ATP binding site.

The protein belongs to the ATPase alpha/beta chains family. In terms of assembly, F-type ATPases have 2 components, CF(1) - the catalytic core - and CF(0) - the membrane proton channel. CF(1) has five subunits: alpha(3), beta(3), gamma(1), delta(1), epsilon(1). CF(0) has three main subunits: a(1), b(2) and c(9-12). The alpha and beta chains form an alternating ring which encloses part of the gamma chain. CF(1) is attached to CF(0) by a central stalk formed by the gamma and epsilon chains, while a peripheral stalk is formed by the delta and b chains.

The protein resides in the cell inner membrane. The catalysed reaction is ATP + H2O + 4 H(+)(in) = ADP + phosphate + 5 H(+)(out). Its function is as follows. Produces ATP from ADP in the presence of a proton gradient across the membrane. The alpha chain is a regulatory subunit. The protein is ATP synthase subunit alpha of Yersinia enterocolitica serotype O:8 / biotype 1B (strain NCTC 13174 / 8081).